Here is a 445-residue protein sequence, read N- to C-terminus: Gamma-glutamyl phosphate reductase (445 aa).

Belongs to the gamma-glutamyl phosphate reductase family.

It localises to the cytoplasm. It carries out the reaction L-glutamate 5-semialdehyde + phosphate + NADP(+) = L-glutamyl 5-phosphate + NADPH + H(+). The protein operates within amino-acid biosynthesis; L-proline biosynthesis; L-glutamate 5-semialdehyde from L-glutamate: step 2/2. Its function is as follows. Catalyzes the NADPH-dependent reduction of L-glutamate 5-phosphate into L-glutamate 5-semialdehyde and phosphate. The product spontaneously undergoes cyclization to form 1-pyrroline-5-carboxylate. The sequence is that of Gamma-glutamyl phosphate reductase from Saccharopolyspora erythraea (strain ATCC 11635 / DSM 40517 / JCM 4748 / NBRC 13426 / NCIMB 8594 / NRRL 2338).